We begin with the raw amino-acid sequence, 266 residues long: F-actin-capping protein subunit beta (266 aa).

The protein belongs to the F-actin-capping protein beta subunit family. In terms of assembly, component of the F-actin capping complex, composed of a heterodimer of an alpha and a beta subunit.

The protein localises to the cytoplasm. Its subcellular location is the cytoskeleton. It localises to the actin patch. F-actin-capping proteins bind in a Ca(2+)-independent manner to the fast growing ends of actin filaments (barbed end) thereby blocking the exchange of subunits at these ends. Unlike other capping proteins (such as gelsolin and severin), these proteins do not sever actin filaments. This Aspergillus oryzae (strain ATCC 42149 / RIB 40) (Yellow koji mold) protein is F-actin-capping protein subunit beta (cap2).